Consider the following 347-residue polypeptide: GMP reductase (347 aa).

108–131 is a binding site for NADP(+); that stretch reads ADFEKTKQILDLNPALNFVCIDVA. Gly-181 and Gly-183 together coordinate K(+). Cys-186 functions as the Thioimidate intermediate in the catalytic mechanism. NADP(+) is bound at residue 216–239; sequence IVSDGGCTTPGDVAKAFGGGADFV.

Belongs to the IMPDH/GMPR family. GuaC type 1 subfamily. As to quaternary structure, homotetramer.

The catalysed reaction is IMP + NH4(+) + NADP(+) = GMP + NADPH + 2 H(+). Functionally, catalyzes the irreversible NADPH-dependent deamination of GMP to IMP. It functions in the conversion of nucleobase, nucleoside and nucleotide derivatives of G to A nucleotides, and in maintaining the intracellular balance of A and G nucleotides. The chain is GMP reductase from Escherichia coli (strain SMS-3-5 / SECEC).